The sequence spans 368 residues: Branched-chain-amino-acid aminotransferase (368 aa).

Position 101 (arginine 101) interacts with pyridoxal 5'-phosphate. The residue at position 204 (lysine 204) is an N6-(pyridoxal phosphate)lysine. Pyridoxal 5'-phosphate contacts are provided by residues tyrosine 209, 271–272 (IT), and threonine 314.

The protein belongs to the class-IV pyridoxal-phosphate-dependent aminotransferase family. As to quaternary structure, homodimer. The cofactor is pyridoxal 5'-phosphate.

The enzyme catalyses L-leucine + 2-oxoglutarate = 4-methyl-2-oxopentanoate + L-glutamate. The catalysed reaction is L-isoleucine + 2-oxoglutarate = (S)-3-methyl-2-oxopentanoate + L-glutamate. It carries out the reaction L-valine + 2-oxoglutarate = 3-methyl-2-oxobutanoate + L-glutamate. It functions in the pathway amino-acid biosynthesis; L-isoleucine biosynthesis; L-isoleucine from 2-oxobutanoate: step 4/4. It participates in amino-acid biosynthesis; L-leucine biosynthesis; L-leucine from 3-methyl-2-oxobutanoate: step 4/4. Its pathway is amino-acid biosynthesis; L-valine biosynthesis; L-valine from pyruvate: step 4/4. Functionally, catalyzes the reversible transfers of an amino group from glutamate to the alpha-ketoacid of the respective amino acid in the final step in the biosynthesis of branchedchain amino acids. The chain is Branched-chain-amino-acid aminotransferase (ilvE) from Mycobacterium tuberculosis (strain CDC 1551 / Oshkosh).